The chain runs to 394 residues: Phosphoglycerate kinase (394 aa).

Substrate is bound by residues 21–23 (DFN), arginine 37, 60–63 (HLGR), arginine 119, and arginine 152. ATP contacts are provided by residues lysine 202, glutamate 324, and 350-353 (GGDS).

Belongs to the phosphoglycerate kinase family. As to quaternary structure, monomer.

It is found in the cytoplasm. It catalyses the reaction (2R)-3-phosphoglycerate + ATP = (2R)-3-phospho-glyceroyl phosphate + ADP. It participates in carbohydrate degradation; glycolysis; pyruvate from D-glyceraldehyde 3-phosphate: step 2/5. The polypeptide is Phosphoglycerate kinase (Carboxydothermus hydrogenoformans (strain ATCC BAA-161 / DSM 6008 / Z-2901)).